A 388-amino-acid polypeptide reads, in one-letter code: Succinate--CoA ligase [ADP-forming] subunit beta (388 aa).

An ATP-grasp domain is found at 9 to 244; the sequence is KQLFARYGMP…PSQEDAREAH (236 aa). ATP contacts are provided by residues K46, 53-55, E99, T102, and E107; that span reads GRG. Mg(2+) contacts are provided by N199 and D213. Residues N264 and 321–323 each bind substrate; that span reads GIV.

It belongs to the succinate/malate CoA ligase beta subunit family. Heterotetramer of two alpha and two beta subunits. Mg(2+) is required as a cofactor.

It carries out the reaction succinate + ATP + CoA = succinyl-CoA + ADP + phosphate. The catalysed reaction is GTP + succinate + CoA = succinyl-CoA + GDP + phosphate. It participates in carbohydrate metabolism; tricarboxylic acid cycle; succinate from succinyl-CoA (ligase route): step 1/1. Succinyl-CoA synthetase functions in the citric acid cycle (TCA), coupling the hydrolysis of succinyl-CoA to the synthesis of either ATP or GTP and thus represents the only step of substrate-level phosphorylation in the TCA. The beta subunit provides nucleotide specificity of the enzyme and binds the substrate succinate, while the binding sites for coenzyme A and phosphate are found in the alpha subunit. This chain is Succinate--CoA ligase [ADP-forming] subunit beta, found in Yersinia pseudotuberculosis serotype O:1b (strain IP 31758).